Reading from the N-terminus, the 202-residue chain is Endothelin-1 (202 aa).

A signal peptide spans 1 to 25 (MDYLPVLFSLLLVVFQGAPEAAVLG). A propeptide spanning residues 26-50 (AELSTGPDSGGEKPAPSAPWRPRRS) is cleaved from the precursor. Positions 28 to 48 (LSTGPDSGGEKPAPSAPWRPR) are disordered. 2 cysteine pairs are disulfide-bonded: Cys-53/Cys-67 and Cys-55/Cys-63. Residues 74-202 (VNTPEHIVPY…EKKVTHNRTH (129 aa)) constitute a propeptide that is removed on maturation. The endothelin-like stretch occupies residues 110–124 (CQCASQKDKKCWTFC).

It belongs to the endothelin/sarafotoxin family.

It localises to the secreted. Functionally, endothelins are endothelium-derived vasoconstrictor peptides. Probable ligand for G-protein coupled receptors EDNRA and EDNRB which activates PTK2B, BCAR1, BCAR3 and, GTPases RAP1 and RHOA cascade in glomerular mesangial cells. Also binds the DEAR/FBXW7-AS1 receptor. Promotes mesenteric arterial wall remodeling via activation of ROCK signaling and subsequent colocalization of NFATC3 with F-actin filaments. NFATC3 then translocates to the nucleus where it subsequently promotes the transcription of the smooth muscle hypertrophy and differentiation marker ACTA2. The chain is Endothelin-1 (EDN1) from Felis catus (Cat).